The chain runs to 623 residues: C2H2-type transcription factor zfpA (623 aa).

Residues 202-219 show a composition bias toward polar residues; the sequence is GLAVSSPMPNSGPHSRSV. 2 disordered regions span residues 202 to 256 and 468 to 493; these read GLAV…EKGR and SNKANSSLGSRPIMGNHNAVTKNGKA. Over residues 227–239 the composition is skewed to low complexity; sequence SISSTNSRRSQLS. A C2H2-type zinc finger spans residues 255–276; the sequence is GRCPHPDCGRVFKDLKAHMLTH.

It localises to the nucleus. In terms of biological role, transcription factor involved in fungal growth and virulence potential. Negatively regulates antifungal drug susceptibility via transcriptional inhibition of the expressions of drug efflux pumps in a crzA-dependent way. Under the treatment of azoles, both zfpA and crzA transfer to nuclei and coregulate the expression of multidrug transporters and then keep normal drug susceptibility in fungal cells. The polypeptide is C2H2-type transcription factor zfpA (Aspergillus fumigatus (strain CBS 144.89 / FGSC A1163 / CEA10) (Neosartorya fumigata)).